Reading from the N-terminus, the 280-residue chain is Transcription factor MYB46 (280 aa).

HTH myb-type domains follow at residues 15–67 (VKKM…INYL) and 68–122 (RPDL…KKRL). 2 DNA-binding regions (H-T-H motif) span residues 43–67 (WSDVAKNAGLQRCGKSCRLRWINYL) and 95–118 (WSQIAARLPGRTDNEIKNFWNSTI). The segment at 129–150 (SNLINNSSSSPNTASDSSSNSA) is disordered.

In terms of tissue distribution, expressed at low levels in stems and siliques, specifically in xylem.

The protein localises to the nucleus. Transcription activator. Involved in the regulation of secondary wall biosynthesis in fibers and vessels. Transcription activator of the mannan synthase CSLA9 that recognizes and binds to the DNA consensus sequence 5'-[AG][GT]T[AT]GGT[GA]-3' cis-regulatory element of CSLA9 promoter. Transcription factor that acts as a molecular switch in the NAC012/SND1-mediated transcriptional network regulating secondary wall biosynthesis. Is directly activated by NAC012/SND1. Functions redundantly with MYB83 in the transcriptional regulatory cascade leading to secondary wall formation in fibers and vessels. Transcription activator that binds to the DNA consensus sequence 5'-ACC[AT]A[AC][TC]-3', designated as the secondary wall MYB-responsive element (SMRE). Regulates directly numerous transcription factors and a number of genes involved in secondary wall biosynthesis that contain SMRE elements in their promoters. Is an obligate component of the transcriptional regulatory complex toward the commitment of secondary wall cellulose synthesis. Is required for functional expression of the three secondary wall CESA genes, CESA4, CESA7 and CESA8. This is Transcription factor MYB46 from Arabidopsis thaliana (Mouse-ear cress).